We begin with the raw amino-acid sequence, 191 residues long: Methylated-DNA--protein-cysteine methyltransferase (191 aa).

Residues tyrosine 120 and arginine 134 each coordinate DNA. Cysteine 151 (nucleophile; methyl group acceptor) is an active-site residue.

It belongs to the MGMT family.

The protein localises to the nucleus. The catalysed reaction is a 6-O-methyl-2'-deoxyguanosine in DNA + L-cysteinyl-[protein] = S-methyl-L-cysteinyl-[protein] + a 2'-deoxyguanosine in DNA. It catalyses the reaction a 4-O-methyl-thymidine in DNA + L-cysteinyl-[protein] = a thymidine in DNA + S-methyl-L-cysteinyl-[protein]. Functionally, involved in the cellular defense against the biological effects of O6-methylguanine (O6-MeG) and O4-methylthymine (O4-MeT) in DNA. Repairs the methylated nucleobase in DNA by stoichiometrically transferring the methyl group to a cysteine residue in the enzyme. This is a suicide reaction: the enzyme is irreversibly inactivated. In Debaryomyces hansenii (strain ATCC 36239 / CBS 767 / BCRC 21394 / JCM 1990 / NBRC 0083 / IGC 2968) (Yeast), this protein is Methylated-DNA--protein-cysteine methyltransferase (MGT1).